The chain runs to 544 residues: Chaperonin GroEL (544 aa).

ATP-binding positions include 30 to 33 (TLGP), lysine 51, 87 to 91 (DGTTT), glycine 415, and aspartate 495.

This sequence belongs to the chaperonin (HSP60) family. As to quaternary structure, forms a cylinder of 14 subunits composed of two heptameric rings stacked back-to-back. Interacts with the co-chaperonin GroES.

It localises to the cytoplasm. It carries out the reaction ATP + H2O + a folded polypeptide = ADP + phosphate + an unfolded polypeptide.. In terms of biological role, together with its co-chaperonin GroES, plays an essential role in assisting protein folding. The GroEL-GroES system forms a nano-cage that allows encapsulation of the non-native substrate proteins and provides a physical environment optimized to promote and accelerate protein folding. The protein is Chaperonin GroEL of Aeromonas salmonicida.